Here is a 140-residue protein sequence, read N- to C-terminus: Nucleoside diphosphate kinase (140 aa).

Lys11, Phe59, Arg87, Thr93, Arg104, and Asn114 together coordinate ATP. Catalysis depends on His117, which acts as the Pros-phosphohistidine intermediate.

Belongs to the NDK family. In terms of assembly, homotetramer. The cofactor is Mg(2+).

The protein localises to the cytoplasm. The catalysed reaction is a 2'-deoxyribonucleoside 5'-diphosphate + ATP = a 2'-deoxyribonucleoside 5'-triphosphate + ADP. It carries out the reaction a ribonucleoside 5'-diphosphate + ATP = a ribonucleoside 5'-triphosphate + ADP. In terms of biological role, major role in the synthesis of nucleoside triphosphates other than ATP. The ATP gamma phosphate is transferred to the NDP beta phosphate via a ping-pong mechanism, using a phosphorylated active-site intermediate. In Mesorhizobium japonicum (strain LMG 29417 / CECT 9101 / MAFF 303099) (Mesorhizobium loti (strain MAFF 303099)), this protein is Nucleoside diphosphate kinase.